The following is a 300-amino-acid chain: GTPase Era (300 aa).

The Era-type G domain maps to 4-172 (KSGFVALAGK…LEKIKEELPE (169 aa)). The segment at 12-19 (GKPNVGKS) is G1. Residue 12 to 19 (GKPNVGKS) coordinates GTP. Residues 38 to 42 (QTTRN) form a G2 region. Positions 59 to 62 (DTPG) are G3. Residues 59-63 (DTPGI) and 121-124 (NKID) each bind GTP. The G4 stretch occupies residues 121-124 (NKID). The tract at residues 151–153 (ISA) is G5. Residues 195–280 (IREKIFHLTR…YLDLNVKVKE (86 aa)) enclose the KH type-2 domain.

The protein belongs to the TRAFAC class TrmE-Era-EngA-EngB-Septin-like GTPase superfamily. Era GTPase family. In terms of assembly, monomer.

It localises to the cytoplasm. The protein localises to the cell inner membrane. An essential GTPase that binds both GDP and GTP, with rapid nucleotide exchange. Plays a role in 16S rRNA processing and 30S ribosomal subunit biogenesis and possibly also in cell cycle regulation and energy metabolism. The sequence is that of GTPase Era from Thermotoga petrophila (strain ATCC BAA-488 / DSM 13995 / JCM 10881 / RKU-1).